The primary structure comprises 710 residues: Protein-glutamine gamma-glutamyltransferase Z (710 aa).

Residues Cys279, His338, and Asp361 contribute to the active site. Residues Asn401, Asp403, Glu450, and Glu455 each coordinate Ca(2+).

This sequence belongs to the transglutaminase superfamily. Transglutaminase family. Ca(2+) serves as cofactor. In terms of tissue distribution, widely expressed.

It catalyses the reaction L-glutaminyl-[protein] + L-lysyl-[protein] = [protein]-L-lysyl-N(6)-5-L-glutamyl-[protein] + NH4(+). Catalyzes the cross-linking of proteins and the conjugation of polyamines to proteins. The sequence is that of Protein-glutamine gamma-glutamyltransferase Z (TGM7) from Homo sapiens (Human).